The sequence spans 346 residues: Melanoma-associated antigen B3 (346 aa).

Residues 1-35 form a disordered region; that stretch reads MPRGQKSTLHAREKRQQTRGQTQDHQGAQITATNK. The span at 18 to 33 shows a compositional bias: polar residues; the sequence is TRGQTQDHQGAQITAT. The 200-residue stretch at 111–310 folds into the MAGE domain; the sequence is LIMKTNMLVQ…SAFQFWYEEA (200 aa).

Expressed in testis.

This Homo sapiens (Human) protein is Melanoma-associated antigen B3 (MAGEB3).